Consider the following 199-residue polypeptide: Small heat shock protein hspG4 (199 aa).

In terms of domain architecture, sHSP spans 30-199; that stretch reads NKRVDIIPSM…SSNTIKININ (170 aa). Positions 83-105 are disordered; it reads KNQQQQQQQQQLENSNNKENDEP.

Belongs to the small heat shock protein (HSP20) family.

This Dictyostelium discoideum (Social amoeba) protein is Small heat shock protein hspG4 (hspG4).